The primary structure comprises 166 residues: MSIAYDLLLSILIYLPAFVANGSGPFIKRGTPIDFGKNFVDGRRLFGDGKTFEGLIVALTFGTTVGVIISKFFTAEWTLISFLESLFAMIGDMIGAFIKRRLGIPRGGRVLGLDQLDFVLGASLILVLMRVNITWYQFLFICGLAFFLHQGTNYVAYLLKIKNVPW.

5 helical membrane passes run 7–27 (LLLSILIYLPAFVANGSGPFI), 55–75 (LIVALTFGTTVGVIISKFFTA), 78–98 (TLISFLESLFAMIGDMIGAFI), 116–136 (LDFVLGASLILVLMRVNITWY), and 138–158 (FLFICGLAFFLHQGTNYVAYL).

It belongs to the CDP-archaeol synthase family. It depends on Mg(2+) as a cofactor.

Its subcellular location is the cell membrane. The catalysed reaction is 2,3-bis-O-(geranylgeranyl)-sn-glycerol 1-phosphate + CTP + H(+) = CDP-2,3-bis-O-(geranylgeranyl)-sn-glycerol + diphosphate. It functions in the pathway membrane lipid metabolism; glycerophospholipid metabolism. In terms of biological role, catalyzes the formation of CDP-2,3-bis-(O-geranylgeranyl)-sn-glycerol (CDP-archaeol) from 2,3-bis-(O-geranylgeranyl)-sn-glycerol 1-phosphate (DGGGP) and CTP. This reaction is the third ether-bond-formation step in the biosynthesis of archaeal membrane lipids. In Saccharolobus islandicus (strain L.S.2.15 / Lassen #1) (Sulfolobus islandicus), this protein is CDP-archaeol synthase.